Reading from the N-terminus, the 274-residue chain is NH(3)-dependent NAD(+) synthetase (274 aa).

46–53 (GISGGQDS) is an ATP binding site. Mg(2+) is bound at residue aspartate 52. Position 140 (arginine 140) interacts with deamido-NAD(+). An ATP-binding site is contributed by threonine 160. Mg(2+) is bound at residue glutamate 165. Positions 173 and 180 each coordinate deamido-NAD(+). 2 residues coordinate ATP: lysine 189 and threonine 211. 260–261 (HK) contributes to the deamido-NAD(+) binding site.

It belongs to the NAD synthetase family. In terms of assembly, homodimer.

It catalyses the reaction deamido-NAD(+) + NH4(+) + ATP = AMP + diphosphate + NAD(+) + H(+). It functions in the pathway cofactor biosynthesis; NAD(+) biosynthesis; NAD(+) from deamido-NAD(+) (ammonia route): step 1/1. Catalyzes the ATP-dependent amidation of deamido-NAD to form NAD. Uses ammonia as a nitrogen source. In Lactococcus lactis subsp. cremoris (strain SK11), this protein is NH(3)-dependent NAD(+) synthetase.